The sequence spans 422 residues: Gamma-glutamyl phosphate reductase (422 aa).

The protein belongs to the gamma-glutamyl phosphate reductase family.

Its subcellular location is the cytoplasm. The catalysed reaction is L-glutamate 5-semialdehyde + phosphate + NADP(+) = L-glutamyl 5-phosphate + NADPH + H(+). Its pathway is amino-acid biosynthesis; L-proline biosynthesis; L-glutamate 5-semialdehyde from L-glutamate: step 2/2. In terms of biological role, catalyzes the NADPH-dependent reduction of L-glutamate 5-phosphate into L-glutamate 5-semialdehyde and phosphate. The product spontaneously undergoes cyclization to form 1-pyrroline-5-carboxylate. This chain is Gamma-glutamyl phosphate reductase, found in Saccharophagus degradans (strain 2-40 / ATCC 43961 / DSM 17024).